Consider the following 633-residue polypeptide: Kinesin-like motor protein 9 (633 aa).

The region spanning 1–392 (MIQIFLRVKK…MRYSANAREI (392 aa)) is the Kinesin motor domain. 94-101 (GVSGAGKT) serves as a coordination point for ATP. Disordered regions lie at residues 393 to 423 (LPPP…TKAL), 531 to 556 (LEEE…SRKL), and 575 to 633 (KLWP…INEL). Residues 398–423 (NENSGSQSPSHSLLQKSKNTSSTKAL) show a composition bias toward polar residues. A coiled-coil region spans residues 417–541 (TSSTKALTSH…EEESIKESSA (125 aa)). The span at 578–587 (PQSTLIQAPN) shows a compositional bias: polar residues. Over residues 604-623 (VSPIKPLSPSRRPPLTSLYS) the composition is skewed to low complexity. Residues Ser-605, Ser-611, and Ser-613 each carry the phosphoserine modification. Residues 624–633 (GTTDIDINEL) show a composition bias toward polar residues.

This sequence belongs to the TRAFAC class myosin-kinesin ATPase superfamily. Kinesin family. Interacts with ase1. Phosphorylated by cdc2 and dephosphorylated by clp1. Dephosphorylation is required for the interaction with ase1.

Its subcellular location is the nucleus. The protein resides in the cytoplasm. It localises to the cytoskeleton. The protein localises to the microtubule organizing center. It is found in the spindle pole body. Its function is as follows. Kinesin-like motor protein involved in anaphase B spindle elongation. This is Kinesin-like motor protein 9 (klp9) from Schizosaccharomyces pombe (strain 972 / ATCC 24843) (Fission yeast).